Reading from the N-terminus, the 486-residue chain is Stretch-activated cation channel yam8 (486 aa).

Residues 1–24 (MFFFSTHLILKILFFWSITRNIFG) form the signal peptide. Residues 25–464 (ATYTSLLLNN…PGVEFYESGS (440 aa)) are Extracellular-facing. N-linked (GlcNAc...) asparagine glycosylation is found at Asn33, Asn49, Asn59, Asn82, and Asn93. Residues 465 to 485 (ALLNISWRTFFISLIFWILFV) form a helical membrane-spanning segment. Glu486 is a topological domain (cytoplasmic).

Its subcellular location is the cell membrane. In terms of biological role, calcium-permeable, cation-selective stretch-activated channel (SAC) that functions together with CCH1 to mediate calcium entry into cells. Required during mating. This chain is Stretch-activated cation channel yam8, found in Schizosaccharomyces pombe (strain 972 / ATCC 24843) (Fission yeast).